The sequence spans 255 residues: 5-oxoprolinase subunit A (255 aa).

Belongs to the LamB/PxpA family. In terms of assembly, forms a complex composed of PxpA, PxpB and PxpC.

It carries out the reaction 5-oxo-L-proline + ATP + 2 H2O = L-glutamate + ADP + phosphate + H(+). In terms of biological role, catalyzes the cleavage of 5-oxoproline to form L-glutamate coupled to the hydrolysis of ATP to ADP and inorganic phosphate. This chain is 5-oxoprolinase subunit A, found in Campylobacter jejuni subsp. jejuni serotype O:2 (strain ATCC 700819 / NCTC 11168).